The following is a 174-amino-acid chain: Calcineurin subunit B (174 aa).

EF-hand domains lie at 21–56 (EEIE…ASNP), 60–88 (RLFS…FSVH), 90–125 (NKEE…MVGT), and 131–166 (QLQQ…SNVT). Asp-34, Asn-36, Ser-38, Ser-40, Glu-45, Asp-66, Asp-68, Asp-72, Glu-77, Asp-103, Asp-105, Asp-107, Tyr-109, Glu-114, Asp-144, Asp-146, Asp-148, Lys-150, and Glu-155 together coordinate Ca(2+).

This sequence belongs to the calcineurin regulatory subunit family. In terms of assembly, composed of a catalytic subunit (A) and a regulatory subunit (B).

Regulatory subunit of calcineurin, a calcium-dependent, calmodulin stimulated protein phosphatase. Confers calcium sensitivity. This is Calcineurin subunit B (cnb1) from Schizosaccharomyces pombe (strain 972 / ATCC 24843) (Fission yeast).